The sequence spans 219 residues: MGQPRAIGIIPDGNRRWASLRGENLYIAYYTGYRNVKRILTYIRDFYPAIRSVYLYVLSRDNCSKRSRAELSILYRIMRRSIERDIAEIEKGGASLVIVGDINHPNLPDNIRESLAPYHFDMYLKKGSLPDGRRVVAGLCYDPFWEIEHYTPKTLPSRLLDEIDLVIRTGGEKRLSSFFPLLTRYAELYFIDKLWPDFTREDLDRAVQWFSTRRRPMGR.

Aspartate 12 is a catalytic residue. Aspartate 12 serves as a coordination point for Mg(2+). Substrate is bound by residues 13–16 (GNRR), tryptophan 17, and 59–61 (SRD). The Proton acceptor role is filled by asparagine 62. Substrate is bound by residues arginine 66, arginine 168, and 174–176 (RLS). A Mg(2+)-binding site is contributed by glutamate 187.

Belongs to the UPP synthase family. In terms of assembly, homodimer. Mg(2+) is required as a cofactor.

It carries out the reaction geranylgeranyl diphosphate + 7 isopentenyl diphosphate = tri-trans,hepta-cis-undecaprenyl diphosphate + 7 diphosphate. Catalyzes the sequential condensation of isopentenyl diphosphate (IPP) with geranylgeranyl diphosphate (GGPP) to yield (2Z,6Z,10Z,14Z,18Z,22Z,26Z,30E,34E,38E)-undecaprenyl diphosphate (tritrans,heptacis-UPP). It is probably the precursor of glycosyl carrier lipids. In Aeropyrum pernix (strain ATCC 700893 / DSM 11879 / JCM 9820 / NBRC 100138 / K1), this protein is Tritrans,polycis-undecaprenyl-diphosphate synthase (geranylgeranyl-diphosphate specific).